A 205-amino-acid chain; its full sequence is 3-isopropylmalate dehydratase small subunit (205 aa).

Belongs to the LeuD family. LeuD type 1 subfamily. As to quaternary structure, heterodimer of LeuC and LeuD.

The enzyme catalyses (2R,3S)-3-isopropylmalate = (2S)-2-isopropylmalate. It functions in the pathway amino-acid biosynthesis; L-leucine biosynthesis; L-leucine from 3-methyl-2-oxobutanoate: step 2/4. Catalyzes the isomerization between 2-isopropylmalate and 3-isopropylmalate, via the formation of 2-isopropylmaleate. The polypeptide is 3-isopropylmalate dehydratase small subunit (leuD) (Buchnera aphidicola subsp. Thelaxes suberi).